Consider the following 373-residue polypeptide: Leucine aminopeptidase 1 (373 aa).

A signal peptide spans 1-18; that stretch reads MKFISVLALGATATSVLG. The Zn(2+) site is built by H176 and D195. A glycan (N-linked (GlcNAc...) asparagine) is linked at N196. E234 and D261 together coordinate Zn(2+). A glycan (N-linked (GlcNAc...) asparagine) is linked at N286. C310 and C314 form a disulfide bridge. H343 is a Zn(2+) binding site.

Belongs to the peptidase M28 family. M28E subfamily. Monomer. Zn(2+) serves as cofactor.

The protein localises to the secreted. In terms of biological role, extracellular aminopeptidase which contributes to pathogenicity. This is Leucine aminopeptidase 1 (LAP1) from Arthroderma otae (strain ATCC MYA-4605 / CBS 113480) (Microsporum canis).